Reading from the N-terminus, the 157-residue chain is Large ribosomal subunit protein eL21 (157 aa).

The disordered stretch occupies residues 110–132 (QANDQAKAEGNKAGKRVSTKRNP).

Belongs to the eukaryotic ribosomal protein eL21 family.

The chain is Large ribosomal subunit protein eL21 (RPL21) from Tetrahymena thermophila (strain SB210).